Reading from the N-terminus, the 214-residue chain is Nigrelysin (214 aa).

Residues 1–21 (MKNRLVIIVFMVVTMLCASLA) form the signal peptide. Positions 22–35 (LPLEEKEDEKDEKR) are excised as a propeptide. Residues 38–47 (EVAGAVMEGA) form a plays an important role in the hemolytic activity region. The tract at residues 46-65 (GANLGMSVLQTILQAIGDVS) is N-terminal region. The phosphocholine site is built by S89, V122, S140, P142, Y168, Y172, and Y173. A trp-rich region, which is important for the binding to lipid membrane region spans residues 140–155 (SVPYDYNWYSNWWNVK). The short motif at 179–181 (KGD) is the Cell attachment site, crucial for protein stability element.

The protein belongs to the actinoporin family. Sea anemone subfamily. As to quaternary structure, octamer or nonamer in membranes. Monomer in the soluble state.

Its subcellular location is the secreted. The protein resides in the nematocyst. It localises to the target cell membrane. Functionally, pore-forming protein that forms cation-selective hydrophilic pores in cell membranes and causes cytolysis. Pore formation is a multi-step process that involves specific recognition of membrane sphingomyelin (but neither cholesterol nor phosphatidylcholine) using aromatic rich region and adjacent phosphocholine (POC) binding site, firm binding to the membrane (mainly driven by hydrophobic interactions) accompanied by the transfer of the N-terminal region to the lipid-water interface and finally pore formation after oligomerization of monomers. This protein shows potent hemolytic activity (EC(50)=0.09 nM), as well as potent cytotoxic activity on nucleated cells (L1210 cells). The cytotoxic process starts with cellular swelling that is time and dose dependent and occurs up to a critical volume, probably due to influx of water via pores opened by this actinoporin. The second phase consists of the final loss of membrane integrity that leads to cytolysis. The sequence is that of Nigrelysin from Anthopleura nigrescens (Sea anemone).